Consider the following 349-residue polypeptide: MADLAELWEKVSSNKDSKSLLKKHLTKEVYEKLKDKKTKFGGTLADCIRSGAKNLDSGVGVYASDPEAYTVFQDLLGPVILDYHKITELKHPACDFGDLSNLGFGDFDPSGDWIVSTRVRVGRSHASFGFPPTLNKEQRVEMQRVTQGALEGLTGELKGKYYPLEGMTPDVQKQLTEDHFLFNDSDRFLKAASGYDDWPTGRGIFFNDNKTFLVWVNEEDHIRIISMQKGGDLAAVYKRLVGGIKELEKKLEFARLPNLGYLTFCPSNLGTTLRASVHIKIPKVAKKPEFKEICDKLNLQARGIHGEHTESVGGVYDISNKRRMGLSEIEAIQEMRKGVEEIIKLEKAA.

One can recognise a Phosphagen kinase N-terminal domain in the interval D3–K85. G58 to Y62 serves as a coordination point for substrate. A Phosphagen kinase C-terminal domain is found at W113–A349. Residues S116–R120 and H179 each bind ATP. Residue E219 participates in substrate binding. R223 is a binding site for ATP. C265 provides a ligand contact to substrate. Residues R274 to H278 and R302 to E307 contribute to the ATP site. E307 is a binding site for substrate.

It belongs to the ATP:guanido phosphotransferase family.

It catalyses the reaction L-arginine + ATP = N(omega)-phospho-L-arginine + ADP + H(+). This is Arginine kinase from Liolophura japonica (Chiton).